We begin with the raw amino-acid sequence, 690 residues long: Methionine--tRNA ligase (690 aa).

The 'HIGH' region motif lies at 13–23 (PYANGQIHIGH). Residues cysteine 144, cysteine 147, cysteine 157, and cysteine 160 each coordinate Zn(2+). Residues 335–339 (KMSKS) carry the 'KMSKS' region motif. Position 338 (lysine 338) interacts with ATP. Positions 584–690 (DFAKIDLRVA…SGAVPGMRIR (107 aa)) constitute a tRNA-binding domain.

It belongs to the class-I aminoacyl-tRNA synthetase family. MetG type 1 subfamily. Homodimer. The cofactor is Zn(2+).

It localises to the cytoplasm. The catalysed reaction is tRNA(Met) + L-methionine + ATP = L-methionyl-tRNA(Met) + AMP + diphosphate. In terms of biological role, is required not only for elongation of protein synthesis but also for the initiation of all mRNA translation through initiator tRNA(fMet) aminoacylation. This chain is Methionine--tRNA ligase, found in Cupriavidus metallidurans (strain ATCC 43123 / DSM 2839 / NBRC 102507 / CH34) (Ralstonia metallidurans).